A 184-amino-acid polypeptide reads, in one-letter code: Probable S-adenosyl-L-methionine-binding protein PYRAB06630 (184 aa).

One can recognise a TsaA-like domain in the interval Y9 to N140. Residues P26–Q28, H65–R66, R89, and L120–T123 contribute to the S-adenosyl-L-methionine site.

Belongs to the tRNA methyltransferase O family.

This Pyrococcus abyssi (strain GE5 / Orsay) protein is Probable S-adenosyl-L-methionine-binding protein PYRAB06630.